The sequence spans 262 residues: RNA-binding protein 7 (262 aa).

Residue glycine 2 is modified to N-acetylglycine. The region spanning 10-87 (RTLFVGNLET…RPIKIQFRAG (78 aa)) is the RRM domain. ZCCHC8 binding stretches follow at residues 25–35 (LLFELFHQAGP) and 59–76 (HEVS…IKLF). A disordered region spans residues 95–121 (VSLSYPQHHVGNSSPTSTSPSRTVDNM). Serine 133 and serine 134 each carry phosphoserine. The residue at position 149 (arginine 149) is an Omega-N-methylarginine. Disordered regions lie at residues 159 to 212 (SPHL…HYSR) and 242 to 262 (SHDY…SSRH). Residues 165 to 194 (SGFSPSAQSHNHTFNQSSSSQWRQDTPSSQ) are compositionally biased toward polar residues. Serine 201 carries the post-translational modification Phosphoserine. Residues 242 to 253 (SHDYDNRRDSGR) are compositionally biased toward basic and acidic residues.

Component of the nuclear exosome targeting (NEXT) complex composed of MTREX, ZCCHC8, and RBM7 that directs a subset of non-coding short-lived RNAs for exosomal degradation. Interacts with ZCCHC8 and SF3B2/SAP145. Binds to MTREX through ZCCHC8. Interacts with YWHAE and YWHAZ; these interactions are stress-dependent and RBM7 phosphorylation dependent; release RNA from the NEXT complex and may affect RNA targeting to the nuclear RNA exosomome for degradation. Interacts with MEPCE and LARP7, the core subunits of 7SK snRNP; upon genotoxic stress this interaction is enhanced, triggering the release of inactive P-TEFb complex from the core and P-TEFb complex activation. In terms of processing, phosphorylated at Ser-133 by MAPK14/p38-alpha-activated MAPKAPK2/MK2; this phosphorylation is stress-dependent; this phosphorylation decreases its RNA-binding capacity therefore affecting RNA nuclear exosome-mediated degradation. This phosphorylation mediates YWHAE and YWHAZ interactions.

It is found in the nucleus. Its subcellular location is the nucleoplasm. Functionally, RNA-binding subunit of the trimeric nuclear exosome targeting (NEXT) complex, a complex that functions as an RNA exosome cofactor that directs a subset of non-coding short-lived RNAs for exosomal degradation. NEXT is involved in surveillance and turnover of aberrant transcripts and non-coding RNAs. Binds preferentially polyuridine sequences and associates with newly synthesized RNAs, including pre-mRNAs and short-lived exosome substrates such as promoter upstream transcripts (PROMPTs), enhancer RNAs (eRNAs), and 3'-extended products from small nuclear RNAs (snRNAs). Participates in several biological processes including DNA damage response (DDR) and stress response. During stress response, activation of the p38MAPK-MK2 pathway decreases RBM7-RNA-binding and subsequently the RNA exosome degradation activities, thereby modulating the turnover of non-coding transcriptome. Participates in DNA damage response (DDR), through its interaction with MEPCE and LARP7, the core subunits of 7SK snRNP complex, that release the positive transcription elongation factor b (P-TEFb) complex from the 7SK snRNP. In turn, activation of P-TEFb complex induces the transcription of P-TEFb-dependent DDR genes to promote cell viability. The protein is RNA-binding protein 7 of Bos taurus (Bovine).